The chain runs to 481 residues: Proline--tRNA ligase (481 aa).

This sequence belongs to the class-II aminoacyl-tRNA synthetase family. ProS type 3 subfamily. In terms of assembly, homodimer.

The protein localises to the cytoplasm. The catalysed reaction is tRNA(Pro) + L-proline + ATP = L-prolyl-tRNA(Pro) + AMP + diphosphate. Its function is as follows. Catalyzes the attachment of proline to tRNA(Pro) in a two-step reaction: proline is first activated by ATP to form Pro-AMP and then transferred to the acceptor end of tRNA(Pro). The protein is Proline--tRNA ligase of Chloroherpeton thalassium (strain ATCC 35110 / GB-78).